Consider the following 224-residue polypeptide: UPF0758 protein VCM66_0205 (224 aa).

Positions 1-20 are disordered; sequence MSLKQLPTESMPREKLLQRG. One can recognise an MPN domain in the interval 102 to 224; that stretch reads ALTSPQQTKL…VVSFAERGWI (123 aa). Zn(2+) is bound by residues histidine 173, histidine 175, and aspartate 186. A JAMM motif motif is present at residues 173–186; the sequence is HNHPSGVAEPSQAD.

Belongs to the UPF0758 family.

This is UPF0758 protein VCM66_0205 from Vibrio cholerae serotype O1 (strain M66-2).